The sequence spans 429 residues: Threonine synthase (429 aa).

K107 bears the N6-(pyridoxal phosphate)lysine mark.

This sequence belongs to the threonine synthase family. Pyridoxal 5'-phosphate serves as cofactor.

It carries out the reaction O-phospho-L-homoserine + H2O = L-threonine + phosphate. Its pathway is amino-acid biosynthesis; L-threonine biosynthesis; L-threonine from L-aspartate: step 5/5. Functionally, catalyzes the gamma-elimination of phosphate from L-phosphohomoserine and the beta-addition of water to produce L-threonine. The chain is Threonine synthase (thrC) from Serratia marcescens.